A 1007-amino-acid polypeptide reads, in one-letter code: Bifunctional glutamine synthetase adenylyltransferase/adenylyl-removing enzyme (1007 aa).

Residues 1 to 496 (MTREQLSLTV…LHERLFYRPL (496 aa)) are adenylyl removase. An adenylyl transferase region spans residues 505–1007 (NEDARLSGEA…GPPQRPATTA (503 aa)).

The protein belongs to the GlnE family. Mg(2+) is required as a cofactor.

It carries out the reaction [glutamine synthetase]-O(4)-(5'-adenylyl)-L-tyrosine + phosphate = [glutamine synthetase]-L-tyrosine + ADP. The enzyme catalyses [glutamine synthetase]-L-tyrosine + ATP = [glutamine synthetase]-O(4)-(5'-adenylyl)-L-tyrosine + diphosphate. In terms of biological role, involved in the regulation of glutamine synthetase GlnA, a key enzyme in the process to assimilate ammonia. When cellular nitrogen levels are high, the C-terminal adenylyl transferase (AT) inactivates GlnA by covalent transfer of an adenylyl group from ATP to specific tyrosine residue of GlnA, thus reducing its activity. Conversely, when nitrogen levels are low, the N-terminal adenylyl removase (AR) activates GlnA by removing the adenylyl group by phosphorolysis, increasing its activity. The regulatory region of GlnE binds the signal transduction protein PII (GlnB) which indicates the nitrogen status of the cell. The polypeptide is Bifunctional glutamine synthetase adenylyltransferase/adenylyl-removing enzyme (Leifsonia xyli subsp. xyli (strain CTCB07)).